Consider the following 255-residue polypeptide: Small ribosomal subunit protein eS1 (255 aa).

Residues 1 to 18 show a composition bias toward basic residues; that stretch reads MAVGKNKRLSKGKKGLKK. The disordered stretch occupies residues 1 to 28; sequence MAVGKNKRLSKGKKGLKKRTQDPFSRKD. At alanine 2 the chain carries N-acetylalanine; partial. A compositionally biased stretch (basic and acidic residues) spans 19 to 28; sequence RTQDPFSRKD.

The protein belongs to the eukaryotic ribosomal protein eS1 family. In terms of assembly, component of the small ribosomal subunit. Mature ribosomes consist of a small (40S) and a large (60S) subunit. The 40S subunit contains about 33 different proteins and 1 molecule of RNA (18S). The 60S subunit contains about 49 different proteins and 3 molecules of RNA (25S, 5.8S and 5S).

It localises to the cytoplasm. The polypeptide is Small ribosomal subunit protein eS1 (Paracoccidioides lutzii (strain ATCC MYA-826 / Pb01) (Paracoccidioides brasiliensis)).